Here is a 225-residue protein sequence, read N- to C-terminus: MESLGINNIYNALDRIKLNAKMNILVRDPYHYDNNGNIVGVDDSYLKNAYKQILNWSSDGVSLNLDEDVNQALSGYMLQIKKPSNHLTNSPVTITLAGKDSGVGELYRVLSDGTGFLDFNKFDENWRSLVDPGDDVYVYAVTKEDFNAVTRDENGNIANKLKNTLVLSGKIKEINIKTTNINIFVVFMFIIYLLFYIISSTVFAKSCNCILIYVEVSQLMNSVFY.

A helical membrane pass occupies residues 181-203; that stretch reads INIFVVFMFIIYLLFYIISSTVF.

The protein resides in the cell membrane. This is an uncharacterized protein from Bacillus anthracis.